The chain runs to 289 residues: Probable early E4 33 kDa protein (289 aa).

This sequence belongs to the adenoviridae E4 30 to 34 kDa protein family. As to quaternary structure, interacts with E1B-55k.

Its subcellular location is the host nucleus. It localises to the host cytoplasm. Plays a major role to prevent cellular inhibition of viral genome replication by nuclear bodies. Assembles an SCF-like E3 ubiquitin ligase complex based on the cellular proteins ELOB, ELOC, CUL5 and RBX1, in cooperation with viral E1B-55K. This viral RING-type ligase ubiquitinates cellular substrates prior to proteasomal degradation: p53/TP53, LIG4, MRE11-RAD50-NBS1 (MRN) complex, ITGA3, DAXX and BLM. The polypeptide is Probable early E4 33 kDa protein (Mus musculus (Mouse)).